A 459-amino-acid polypeptide reads, in one-letter code: DNA-binding protein P3A2 (459 aa).

A disordered region spans residues 1-25 (MMISEDISEPSSPDTPFDDSDLLNS).

The protein belongs to the NRF1/Ewg family.

It is found in the nucleus. Its function is as follows. Transcriptional regulator that interacts with specific sites in the control region of the cyIIIa actin gene. Also binds specifically to similar target sites located in the regulatory region of the SM50 gene. The polypeptide is DNA-binding protein P3A2 (Strongylocentrotus purpuratus (Purple sea urchin)).